Reading from the N-terminus, the 148-residue chain is Large ribosomal subunit protein bL9 (148 aa).

The protein belongs to the bacterial ribosomal protein bL9 family.

Its function is as follows. Binds to the 23S rRNA. The chain is Large ribosomal subunit protein bL9 from Prosthecochloris aestuarii (strain DSM 271 / SK 413).